We begin with the raw amino-acid sequence, 649 residues long: FAS-associated factor 1 (649 aa).

The UBA domain maps to 1-57; the sequence is MASNMDREMILADFQACTGIENIDEAITLLEQNNWDLVAAINGVIPQENGILQSDFG. Disordered regions lie at residues 56–84 and 266–290; these read FGGE…SAFR and RRTS…VSDS. A compositionally biased stretch (low complexity) spans 68–82; the sequence is PASHPAPASTPSSSA. A Phosphoserine modification is found at Ser319. The UBX domain occupies 568 to 645; sequence NAEPVSKLRI…NLFPQETLFL (78 aa). Thr579 bears the Phosphothreonine mark. At Ser581 the chain carries Phosphoserine.

In terms of assembly, interacts with CDT1 and ATPase VCP/p97. Interacts (via UBA domain) with FAS (via death domain). Interacts (via UBA domain) with NLRP12 (via DAPIN/PYRIN domain).

Its subcellular location is the nucleus. Its function is as follows. Ubiquitin-binding protein. Required for the progression of DNA replication forks by targeting DNA replication licensing factor CDT1 for degradation. Potentiates but cannot initiate FAS-induced apoptosis. This chain is FAS-associated factor 1 (Faf1), found in Mus musculus (Mouse).